The chain runs to 81 residues: Neuronatin (81 aa).

It belongs to the neuronatin family.

Its function is as follows. May participate in the maintenance of segment identity in the hindbrain and pituitary development, and maturation or maintenance of the overall structure of the nervous system. May function as a regulatory subunit of ion channels. This is Neuronatin (NNAT) from Mesocricetus auratus (Golden hamster).